Reading from the N-terminus, the 163-residue chain is Large ribosomal subunit protein uL15 (163 aa).

The protein belongs to the universal ribosomal protein uL15 family. Part of the 50S ribosomal subunit.

Functionally, binds to the 23S rRNA. The sequence is that of Large ribosomal subunit protein uL15 from Orientia tsutsugamushi (strain Boryong) (Rickettsia tsutsugamushi).